The primary structure comprises 382 residues: DNA double-strand break repair protein Mre11 (382 aa).

Mn(2+)-binding residues include Asp8, His10, Asp49, and Asp84. The Proton donor role is filled by His85. The Mn(2+) site is built by His156, His187, and His189.

The protein belongs to the MRE11/RAD32 family. In terms of assembly, homodimer. Forms a heterotetramer composed of two Mre11 subunits and two Rad50 subunits. Interacts with Rad50 and HerA. Mn(2+) is required as a cofactor.

Its activity is regulated as follows. Nuclease activity is regulated by Rad50. Part of the Rad50/Mre11 complex, which is involved in the early steps of DNA double-strand break (DSB) repair. The complex may facilitate opening of the processed DNA ends to aid in the recruitment of HerA and NurA. Mre11 binds to DSB ends and has both double-stranded 3'-5' exonuclease activity and single-stranded endonuclease activity. Recruited immediately to chromosomal DNA after gamma irradiation, and remains DNA bound in the course of DNA repair. This chain is DNA double-strand break repair protein Mre11, found in Sulfolobus acidocaldarius (strain ATCC 33909 / DSM 639 / JCM 8929 / NBRC 15157 / NCIMB 11770).